The following is a 413-amino-acid chain: Multifunctional CCA protein (413 aa).

ATP-binding residues include G8 and R11. CTP contacts are provided by G8 and R11. The Mg(2+) site is built by D21 and D23. Residues R91, R143, and R146 each coordinate ATP. CTP is bound by residues R91, R143, and R146. One can recognise an HD domain in the interval 232–333 (TGVHVMMVVD…VRLFERSDAL (102 aa)).

This sequence belongs to the tRNA nucleotidyltransferase/poly(A) polymerase family. Bacterial CCA-adding enzyme type 1 subfamily. As to quaternary structure, monomer. Can also form homodimers and oligomers. Mg(2+) serves as cofactor. Ni(2+) is required as a cofactor.

The enzyme catalyses a tRNA precursor + 2 CTP + ATP = a tRNA with a 3' CCA end + 3 diphosphate. It catalyses the reaction a tRNA with a 3' CCA end + 2 CTP + ATP = a tRNA with a 3' CCACCA end + 3 diphosphate. Functionally, catalyzes the addition and repair of the essential 3'-terminal CCA sequence in tRNAs without using a nucleic acid template. Adds these three nucleotides in the order of C, C, and A to the tRNA nucleotide-73, using CTP and ATP as substrates and producing inorganic pyrophosphate. tRNA 3'-terminal CCA addition is required both for tRNA processing and repair. Also involved in tRNA surveillance by mediating tandem CCA addition to generate a CCACCA at the 3' terminus of unstable tRNAs. While stable tRNAs receive only 3'-terminal CCA, unstable tRNAs are marked with CCACCA and rapidly degraded. This is Multifunctional CCA protein from Burkholderia cenocepacia (strain HI2424).